A 242-amino-acid polypeptide reads, in one-letter code: Glucosamine-6-phosphate deaminase (242 aa).

The active-site Proton acceptor; for enolization step is Asp67. Residue Asn137 is the For ring-opening step of the active site. The active-site Proton acceptor; for ring-opening step is the His139. Catalysis depends on Glu144, which acts as the For ring-opening step.

The protein belongs to the glucosamine/galactosamine-6-phosphate isomerase family. NagB subfamily.

It catalyses the reaction alpha-D-glucosamine 6-phosphate + H2O = beta-D-fructose 6-phosphate + NH4(+). It functions in the pathway amino-sugar metabolism; N-acetylneuraminate degradation; D-fructose 6-phosphate from N-acetylneuraminate: step 5/5. Catalyzes the reversible isomerization-deamination of glucosamine 6-phosphate (GlcN6P) to form fructose 6-phosphate (Fru6P) and ammonium ion. This Staphylococcus saprophyticus subsp. saprophyticus (strain ATCC 15305 / DSM 20229 / NCIMB 8711 / NCTC 7292 / S-41) protein is Glucosamine-6-phosphate deaminase.